We begin with the raw amino-acid sequence, 204 residues long: Large ribosomal subunit protein uL4 (204 aa).

The segment at 44–76 (KRQGTQSAKTRSEVRGGGIKPWRQKGTGRARQG) is disordered.

The protein belongs to the universal ribosomal protein uL4 family. As to quaternary structure, part of the 50S ribosomal subunit.

One of the primary rRNA binding proteins, this protein initially binds near the 5'-end of the 23S rRNA. It is important during the early stages of 50S assembly. It makes multiple contacts with different domains of the 23S rRNA in the assembled 50S subunit and ribosome. In terms of biological role, forms part of the polypeptide exit tunnel. In Clostridium perfringens (strain 13 / Type A), this protein is Large ribosomal subunit protein uL4.